The primary structure comprises 223 residues: Ribose-5-phosphate isomerase A (223 aa).

Residues 32–35 (TGST), 83–86 (DGAD), and 96–99 (KGGG) contribute to the substrate site. The active-site Proton acceptor is the E105. Substrate is bound at residue K123.

It belongs to the ribose 5-phosphate isomerase family. Homodimer.

The catalysed reaction is aldehydo-D-ribose 5-phosphate = D-ribulose 5-phosphate. The protein operates within carbohydrate degradation; pentose phosphate pathway; D-ribose 5-phosphate from D-ribulose 5-phosphate (non-oxidative stage): step 1/1. Catalyzes the reversible conversion of ribose-5-phosphate to ribulose 5-phosphate. This chain is Ribose-5-phosphate isomerase A, found in Acinetobacter baumannii (strain SDF).